The chain runs to 282 residues: Shikimate dehydrogenase (NADP(+)) (282 aa).

Shikimate is bound by residues 19–21 (SFS) and threonine 66. Lysine 70 (proton acceptor) is an active-site residue. The shikimate site is built by asparagine 91 and aspartate 106. Residues 130 to 134 (GAGGA), 152 to 157 (NRTVEK), threonine 196, methionine 200, and leucine 224 contribute to the NADP(+) site. Tyrosine 226 lines the shikimate pocket. An NADP(+)-binding site is contributed by glycine 247.

It belongs to the shikimate dehydrogenase family. As to quaternary structure, homodimer.

It catalyses the reaction shikimate + NADP(+) = 3-dehydroshikimate + NADPH + H(+). Its pathway is metabolic intermediate biosynthesis; chorismate biosynthesis; chorismate from D-erythrose 4-phosphate and phosphoenolpyruvate: step 4/7. Its function is as follows. Involved in the biosynthesis of the chorismate, which leads to the biosynthesis of aromatic amino acids. Catalyzes the reversible NADPH linked reduction of 3-dehydroshikimate (DHSA) to yield shikimate (SA). This Methanocaldococcus jannaschii (strain ATCC 43067 / DSM 2661 / JAL-1 / JCM 10045 / NBRC 100440) (Methanococcus jannaschii) protein is Shikimate dehydrogenase (NADP(+)).